The chain runs to 394 residues: Anhydro-N-acetylmuramic acid kinase (394 aa).

11–18 (GTSADGID) serves as a coordination point for ATP.

This sequence belongs to the anhydro-N-acetylmuramic acid kinase family.

The enzyme catalyses 1,6-anhydro-N-acetyl-beta-muramate + ATP + H2O = N-acetyl-D-muramate 6-phosphate + ADP + H(+). It functions in the pathway amino-sugar metabolism; 1,6-anhydro-N-acetylmuramate degradation. The protein operates within cell wall biogenesis; peptidoglycan recycling. Functionally, catalyzes the specific phosphorylation of 1,6-anhydro-N-acetylmuramic acid (anhMurNAc) with the simultaneous cleavage of the 1,6-anhydro ring, generating MurNAc-6-P. Is required for the utilization of anhMurNAc either imported from the medium or derived from its own cell wall murein, and thus plays a role in cell wall recycling. The sequence is that of Anhydro-N-acetylmuramic acid kinase from Deinococcus geothermalis (strain DSM 11300 / CIP 105573 / AG-3a).